A 134-amino-acid polypeptide reads, in one-letter code: 6,7-dimethyl-8-ribityllumazine synthase (134 aa).

Residues Phe-12, 44–46, and 68–70 contribute to the 5-amino-6-(D-ribitylamino)uracil site; these read VFD and SVI. Residue 73 to 74 participates in (2S)-2-hydroxy-3-oxobutyl phosphate binding; the sequence is ET. Catalysis depends on His-76, which acts as the Proton donor. Leu-101 provides a ligand contact to 5-amino-6-(D-ribitylamino)uracil. Arg-116 serves as a coordination point for (2S)-2-hydroxy-3-oxobutyl phosphate.

This sequence belongs to the DMRL synthase family.

The enzyme catalyses (2S)-2-hydroxy-3-oxobutyl phosphate + 5-amino-6-(D-ribitylamino)uracil = 6,7-dimethyl-8-(1-D-ribityl)lumazine + phosphate + 2 H2O + H(+). It functions in the pathway cofactor biosynthesis; riboflavin biosynthesis; riboflavin from 2-hydroxy-3-oxobutyl phosphate and 5-amino-6-(D-ribitylamino)uracil: step 1/2. In terms of biological role, catalyzes the formation of 6,7-dimethyl-8-ribityllumazine by condensation of 5-amino-6-(D-ribitylamino)uracil with 3,4-dihydroxy-2-butanone 4-phosphate. This is the penultimate step in the biosynthesis of riboflavin. This is 6,7-dimethyl-8-ribityllumazine synthase from Methanosarcina acetivorans (strain ATCC 35395 / DSM 2834 / JCM 12185 / C2A).